Consider the following 209-residue polypeptide: MGVHELTHPLVRHKIGLMREADISTKKFRELAAELARLLAYEACGDFPLEVRTITGWDGNPVEIEQIKGKKVTVVPILRAGIGMLDGVLDMIPNAKVSVVGLARNEETLEAHTYLEKFVDKLDERLAVILDPMLATGGSMEATISMLKRNGCRQIRVLALVAAPEGLARVTAAHPDVDIYVAAIDRCLNEHGYILPGLGDAGDKIFGTK.

Residues Arg79, Arg104, and Asp131–Ser139 each bind 5-phospho-alpha-D-ribose 1-diphosphate. Uracil-binding positions include Ile194 and Gly199 to Ala201. A 5-phospho-alpha-D-ribose 1-diphosphate-binding site is contributed by Asp200.

The protein belongs to the UPRTase family. Requires Mg(2+) as cofactor.

It carries out the reaction UMP + diphosphate = 5-phospho-alpha-D-ribose 1-diphosphate + uracil. The protein operates within pyrimidine metabolism; UMP biosynthesis via salvage pathway; UMP from uracil: step 1/1. Its activity is regulated as follows. Allosterically activated by GTP. Functionally, catalyzes the conversion of uracil and 5-phospho-alpha-D-ribose 1-diphosphate (PRPP) to UMP and diphosphate. This is Uracil phosphoribosyltransferase from Geobacter sulfurreducens (strain ATCC 51573 / DSM 12127 / PCA).